Here is a 328-residue protein sequence, read N- to C-terminus: Glycerol-3-phosphate dehydrogenase [NAD(P)+] (328 aa).

3 residues coordinate NADPH: Trp-11, Arg-30, and Lys-103. Sn-glycerol 3-phosphate contacts are provided by Lys-103, Gly-132, and Ser-134. Ala-136 is a binding site for NADPH. The sn-glycerol 3-phosphate site is built by Lys-187, Asp-240, Ser-250, Arg-251, and Asn-252. The Proton acceptor role is filled by Lys-187. Arg-251 lines the NADPH pocket. Val-275 and Glu-277 together coordinate NADPH.

Belongs to the NAD-dependent glycerol-3-phosphate dehydrogenase family.

It is found in the cytoplasm. The enzyme catalyses sn-glycerol 3-phosphate + NAD(+) = dihydroxyacetone phosphate + NADH + H(+). It carries out the reaction sn-glycerol 3-phosphate + NADP(+) = dihydroxyacetone phosphate + NADPH + H(+). Its pathway is membrane lipid metabolism; glycerophospholipid metabolism. Functionally, catalyzes the reduction of the glycolytic intermediate dihydroxyacetone phosphate (DHAP) to sn-glycerol 3-phosphate (G3P), the key precursor for phospholipid synthesis. This chain is Glycerol-3-phosphate dehydrogenase [NAD(P)+], found in Thiobacillus denitrificans (strain ATCC 25259 / T1).